The sequence spans 380 residues: Cytochrome b (380 aa).

4 helical membrane-spanning segments follow: residues 28–48 (IGSL…FLSL), 72–93 (WLVR…YAHI), 109–129 (WLVG…GYVL), and 174–194 (FYSF…VHLL). H78 and H92 together coordinate heme b. Heme b-binding residues include H178 and H192. An a ubiquinone-binding site is contributed by H197. 4 helical membrane-spanning segments follow: residues 222–243 (WKIL…CYIT), 285–305 (IGGV…PLAL), 317–337 (IGQL…WLGA), and 344–364 (YISL…LYMI).

Belongs to the cytochrome b family. In terms of assembly, the main subunits of complex b-c1 are: cytochrome b, cytochrome c1 and the Rieske protein. It depends on heme b as a cofactor.

The protein localises to the mitochondrion inner membrane. Component of the ubiquinol-cytochrome c reductase complex (complex III or cytochrome b-c1 complex) that is part of the mitochondrial respiratory chain. The b-c1 complex mediates electron transfer from ubiquinol to cytochrome c. Contributes to the generation of a proton gradient across the mitochondrial membrane that is then used for ATP synthesis. This chain is Cytochrome b (MT-CYB), found in Cepaea nemoralis (Banded wood snail).